The following is a 397-amino-acid chain: Ribosomal RNA large subunit methyltransferase I (397 aa).

Positions 2-79 constitute a PUA domain; the sequence is TAAIYLVKGR…KEEINKAFFV (78 aa).

This sequence belongs to the methyltransferase superfamily. RlmI family.

The protein localises to the cytoplasm. It catalyses the reaction cytidine(1962) in 23S rRNA + S-adenosyl-L-methionine = 5-methylcytidine(1962) in 23S rRNA + S-adenosyl-L-homocysteine + H(+). Functionally, specifically methylates the cytosine at position 1962 (m5C1962) of 23S rRNA. In Vibrio campbellii (strain ATCC BAA-1116), this protein is Ribosomal RNA large subunit methyltransferase I.